Consider the following 194-residue polypeptide: Calcium channel flower (194 aa).

3 consecutive transmembrane segments (helical) span residues 35 to 55 (LGIV…FSII), 66 to 88 (IIQM…VCFE), and 107 to 127 (GLYI…ASLF).

It belongs to the calcium channel flower family. In terms of assembly, homomultimer. Associates with the dally/ magu complex.

The protein localises to the cell membrane. It localises to the cytoplasmic vesicle. It is found in the secretory vesicle. The protein resides in the synaptic vesicle membrane. Its subcellular location is the presynaptic cell membrane. The protein localises to the endosome. Its activity is regulated as follows. Channel activity is inhibited by La(3+), which reduces Ca(2+) influx and thus inhibits it's function in promoting activity-dependent bulk endocytosis (ADBE) in response to high stimuli. Transmembrane protein which mediates synaptic endocytosis, fitness-based cell culling, neuronal culling, morphogen gradient scaling, and calcium transport. Regulates synaptic endocytosis and hence couples exo- with endocytosis. Controls two major modes of synaptic vesicle (SV) endocytosis in the synaptic boutons of neuromuscular junctions (NMJs); Ca(2+) channel-independent Clathrin-mediated endocytosis (CME) in response to mild stimulation, and Ca(2+) channel-dependent activity-dependent bulk endocytosis (ADBE) in response to strong stimulation. Functions in ADBE and subsequent SV reformation from bulk endosomes by initiating Ca(2+) channel-dependent phosphatidylinositol 4,5-bisphosphate (PtdIns(4,5)P2) compartmentalization in synaptic boutons. There it acts at the periactive zone to provide the low Ca(2+) levels required to initiate Calcineurin activation and upregulate PtdIns(4,5)P2. Conversely PtdIns(4,5)P2 enhances fwe Ca(2+) channel-activity, establishing a positive feedback loop that induces PtdIns(4,5)P2 microdomain at the periactive zone. These microdomains trigger bulk membrane invagination (i.e. ADBE) by triggering actin polymerization while also promoting localization of fwe to bulk endosomes, thereby removing the ADBE trigger to reduce endocytosis and prevent excess membrane uptake. PtdIns(4,5)P2 then promotes SV reformation from the bulk endosomes, to coordinate ADBE and subsequent SV reformation. Different combinations of the flower isoforms at the cell membrane are also required for the identification and elimination of suboptimal or supernumerary cells during development, regeneration, and adulthood. Required for the recognition and elimination of unfit cells in the developing wing during cell competition. In the developing pupal retina, mediates the elimination of unwanted postmitotic neurons, including supernumerary photoreceptor neurons that form at the periphery of the retina and are contained within incomplete ommatidia units. Also required for efficient elimination and replacement of old neurons by newly generated neurons during regeneration in the adult brain following mechanical injury. Downstream of the flower fitness fingerprints, cells identified as unwanted or unfit are eliminated via apoptosis through the expression of ahuizotl (azot). However, the cells marked for elimination by the flower isoforms only undergo apoptosis if additional thresholds are met; (1) their neighboring fit/healthy cells express different levels of the fwe isoforms, and (2) the levels of the protective signal SPARC expressed by the loser or unwanted cells are unable to inhibit caspase activation. These additional thresholds for flower-mediated apoptosis, allows useful cells to recover from transient and limited stress before they are unnecessarily eliminated. Functions with dally and magu in a mechanism of scaling, which utilises apoptosis to ensure that the dpp morphogen gradient, which mediates organ growth, remains proportional to the size of the growing wing. In this mechanism, fwe represses dally- and Magu-dependent activity in expanding the gradient, and dally/Magu inhibits fwe-dependent apoptosis to keep cell death rate low. When the levels of these different proteins are optimally regulated the gradient correctly scales with organ growth but when this fails, fwe-mediated apoptosis is activated to trim the developing tissue to match the correct size of the gradient. This is Calcium channel flower from Drosophila sechellia (Fruit fly).